Consider the following 152-residue polypeptide: Ubiquitin-conjugating enzyme E2 A (152 aa).

The region spanning 4–150 (PARRRLMRDF…VSAIVEQSWR (147 aa)) is the UBC core domain. The active-site Glycyl thioester intermediate is Cys88. Phosphoserine; by CDK9 is present on Ser120.

This sequence belongs to the ubiquitin-conjugating enzyme family. Interacts with RAD18 and WAC. Interacts with RFPL4A and CCNB1. Post-translationally, phosphorylation at Ser-120 by CDK9 increases activity towards histone H2B.

Its subcellular location is the late endosome. It is found in the lysosome. The enzyme catalyses S-ubiquitinyl-[E1 ubiquitin-activating enzyme]-L-cysteine + [E2 ubiquitin-conjugating enzyme]-L-cysteine = [E1 ubiquitin-activating enzyme]-L-cysteine + S-ubiquitinyl-[E2 ubiquitin-conjugating enzyme]-L-cysteine.. It functions in the pathway protein modification; protein ubiquitination. Functionally, E2 ubiquitin-conjugating enzyme that accepts ubiquitin from the ubiquitin-activating enzyme E1 and transfers it to a E3 ubiquitin-protein ligase. In vitro catalyzes 'Lys-11', as well as 'Lys-48'-linked polyubiquitination. Together with the E3 enzyme BRE1 (RNF20 and/or RNF40), plays a role in transcription regulation by catalyzing the monoubiquitination of histone H2B at 'Lys-120' to form H2BK120ub1. H2BK120ub1 gives a specific tag for epigenetic transcriptional activation, elongation by RNA polymerase II, telomeric silencing, and is also a prerequisite for H3K4me and H3K79me formation. Involved in mitophagy by acting as a E2 ubiquitin-conjugating enzyme for PRKN. In association with the E3 enzyme UBR4, is involved in N-end rule-dependent protein degradation. In association with the E3 ubiquitin-protein ligase complex SIFI, inhibits the mitochondrial stress response by acting as a E2 ubiquitin-conjugating enzyme for UBR4 and KCMF1. In Homo sapiens (Human), this protein is Ubiquitin-conjugating enzyme E2 A.